A 214-amino-acid chain; its full sequence is MSHCVVLNKLESVLIIGDSRYALSKNEVLLLECLYLRAGDVISHDELLTTCWPDRVVSPTSLPVAIKHIRDVFRKITRSEVIKTYKNEGYSYQKDSVLIIIDDGSTEKESHSAAYTRKEKPDIPIKLVGLQILSHLNSTFFIAIMMVIIIIFFMVGGNDIVSFIDSDTNSVIITNVTTKMNGPTAGLPKVKNSMIFKDDFGLVIICDQSECKQQ.

The first 24 residues, Met-1–Ser-24, serve as a signal peptide directing secretion. Residues Met-1–Lys-94 constitute a DNA-binding region (ompR/PhoB-type).

Functionally, required for expression of pH 6 antigen. This Yersinia pseudotuberculosis serotype I (strain IP32953) protein is Protein PsaE (psaE).